Consider the following 722-residue polypeptide: Exocyst complex component 3-like protein 4 (722 aa).

2 disordered regions span residues 1–53 (MPSP…LGSL) and 92–131 (NDGP…KPEA). Basic and acidic residues predominate over residues 34-46 (SRKEPNAHRKDGT). S52 is modified (phosphoserine). The segment covering 113–122 (GVSQQASTGA) has biased composition (polar residues). Residue S513 is modified to Phosphoserine.

The protein belongs to the SEC6 family.

This is Exocyst complex component 3-like protein 4 (EXOC3L4) from Homo sapiens (Human).